A 493-amino-acid chain; its full sequence is GTPase Der (493 aa).

2 consecutive EngA-type G domains span residues 3 to 166 and 207 to 380; these read PVVA…SGKG and LKLA…DCAT. GTP is bound by residues 9–16, 56–60, 118–121, 213–220, 260–264, and 325–328; these read GRPNVGKS, DTGGI, NKTD, GKPNVGKS, DTAGV, and NKWD. Residues 381-465 enclose the KH-like domain; the sequence is RRVNTSLLTR…PIRIQFKEGA (85 aa).

Belongs to the TRAFAC class TrmE-Era-EngA-EngB-Septin-like GTPase superfamily. EngA (Der) GTPase family. Associates with the 50S ribosomal subunit.

Its function is as follows. GTPase that plays an essential role in the late steps of ribosome biogenesis. This chain is GTPase Der, found in Photorhabdus laumondii subsp. laumondii (strain DSM 15139 / CIP 105565 / TT01) (Photorhabdus luminescens subsp. laumondii).